The sequence spans 163 residues: Nucleotide-binding protein MUL_0671 (163 aa).

The protein belongs to the YajQ family.

Functionally, nucleotide-binding protein. This Mycobacterium ulcerans (strain Agy99) protein is Nucleotide-binding protein MUL_0671.